A 452-amino-acid polypeptide reads, in one-letter code: UDP-N-acetylmuramoylalanine--D-glutamate ligase (452 aa).

119 to 125 (GSNGKTT) serves as a coordination point for ATP.

The protein belongs to the MurCDEF family.

Its subcellular location is the cytoplasm. It catalyses the reaction UDP-N-acetyl-alpha-D-muramoyl-L-alanine + D-glutamate + ATP = UDP-N-acetyl-alpha-D-muramoyl-L-alanyl-D-glutamate + ADP + phosphate + H(+). It participates in cell wall biogenesis; peptidoglycan biosynthesis. Its function is as follows. Cell wall formation. Catalyzes the addition of glutamate to the nucleotide precursor UDP-N-acetylmuramoyl-L-alanine (UMA). This chain is UDP-N-acetylmuramoylalanine--D-glutamate ligase, found in Streptococcus pyogenes serotype M28 (strain MGAS6180).